A 344-amino-acid chain; its full sequence is tRNA N6-adenosine threonylcarbamoyltransferase (344 aa).

Fe cation-binding residues include His-119 and His-123. Substrate contacts are provided by residues 141–145 (VVSGG), Asp-174, Gly-187, Asp-191, and Asn-280. Asp-310 is a Fe cation binding site.

This sequence belongs to the KAE1 / TsaD family. Fe(2+) serves as cofactor.

The protein localises to the cytoplasm. The catalysed reaction is L-threonylcarbamoyladenylate + adenosine(37) in tRNA = N(6)-L-threonylcarbamoyladenosine(37) in tRNA + AMP + H(+). In terms of biological role, required for the formation of a threonylcarbamoyl group on adenosine at position 37 (t(6)A37) in tRNAs that read codons beginning with adenine. Is involved in the transfer of the threonylcarbamoyl moiety of threonylcarbamoyl-AMP (TC-AMP) to the N6 group of A37, together with TsaE and TsaB. TsaD likely plays a direct catalytic role in this reaction. This chain is tRNA N6-adenosine threonylcarbamoyltransferase, found in Listeria monocytogenes serovar 1/2a (strain ATCC BAA-679 / EGD-e).